The primary structure comprises 580 residues: Zinc finger protein 271 (580 aa).

18 consecutive C2H2-type zinc fingers follow at residues 78–100, 104–126, 132–154, 160–182, 188–210, 216–238, 244–266, 272–294, 300–322, 328–350, 356–378, 384–406, 412–434, 440–462, 468–490, 496–518, 524–545, and 551–573; these read YNCD…QRTH, YECE…QRIH, YPCS…QRVH, YKCD…QRIH, YQCS…LRIH, YMCN…QRIH, YPCA…RRIH, YKCS…QRIH, YPCN…QRIH, YPCS…YRIH, YECD…QRIH, YPCN…QRVH, YTCN…QRVH, YHCS…HRVH, YACT…QRIH, YKCM…QRIH, and YPCA…QRVH.

This sequence belongs to the krueppel C2H2-type zinc-finger protein family. Selectively expressed in adult testis.

It localises to the nucleus. Functionally, may act to control gene activity during the pachytene stage of meiotic prophase. May function as a transcription activator. The protein is Zinc finger protein 271 (Znf271) of Mus musculus (Mouse).